A 458-amino-acid chain; its full sequence is Argininosuccinate lyase (458 aa).

It belongs to the lyase 1 family. Argininosuccinate lyase subfamily.

Its subcellular location is the cytoplasm. It carries out the reaction 2-(N(omega)-L-arginino)succinate = fumarate + L-arginine. Its pathway is amino-acid biosynthesis; L-arginine biosynthesis; L-arginine from L-ornithine and carbamoyl phosphate: step 3/3. This Neisseria meningitidis serogroup A / serotype 4A (strain DSM 15465 / Z2491) protein is Argininosuccinate lyase.